The chain runs to 361 residues: Polyribonucleotide 5'-hydroxyl-kinase PH0197 (361 aa).

43–50 provides a ligand contact to ATP; that stretch reads GDVDTGKT.

The cofactor is a divalent metal cation.

The catalysed reaction is a 5'-end dephospho-2'-deoxyribonucleoside-DNA + ATP = a 5'-end 5'-phospho-2'-deoxyribonucleoside-DNA + ADP + H(+). The enzyme catalyses a 5'-end dephospho-ribonucleoside-RNA + ATP = a 5'-end 5'-phospho-ribonucleoside-RNA + ADP + H(+). With respect to regulation, DNA kinase activity is inhibited by 250 mM sodium chloride whereas RNA kinase activity is unaffected. Polynucleotide kinase that can phosphorylate the 5'-hydroxyl groups of both single-stranded RNA (ssRNA) and single-stranded DNA (ssDNA). Exhibits a strong preference for ssRNA. This chain is Polyribonucleotide 5'-hydroxyl-kinase PH0197, found in Pyrococcus horikoshii (strain ATCC 700860 / DSM 12428 / JCM 9974 / NBRC 100139 / OT-3).